The primary structure comprises 373 residues: Glutamine synthetase (373 aa).

Residue Ala-2 is modified to N-acetylalanine. The tract at residues 2-25 (ATSASSHLNKGIKQMYMNLPQGEK) is required for glutamine-induced ubiquitination by CRL4(CRBN) and proteasomal degradation. 2 positions are modified to N6-acetyllysine: Lys-11 and Lys-14. The GS beta-grasp domain occupies 24 to 106 (EKIQLMYIWV…VFCEVFKYNR (83 aa)). A Phosphotyrosine modification is found at Tyr-104. The region spanning 113 to 373 (LRHSCKRIMD…TGDEPFQYKN (261 aa)) is the GS catalytic domain. Glu-134 is a binding site for ATP. Mn(2+) is bound by residues Glu-134, Glu-136, Glu-196, and Glu-203. An ATP-binding site is contributed by 203–208 (EFQIGP). Residue 246–247 (NW) coordinates L-glutamate. His-253 is a Mn(2+) binding site. ATP contacts are provided by residues 255–257 (NFS), Arg-319, and Arg-324. Arg-319 serves as a coordination point for L-glutamate. 336 to 338 (YFE) contacts ADP. Position 338 (Glu-338) interacts with Mn(2+). Residue Arg-340 coordinates L-glutamate. Ser-343 carries the post-translational modification Phosphoserine.

It belongs to the glutamine synthetase family. Decamer; composed of two pentamers. Interacts with PALMD. Interacts with RHOJ. Interacts with BEST2; this interaction tethers a fraction of GLUL to the membrane, causing a decrease of cytosolic glutamine synthase (GS) activity and inhibits the chloride channel activity of BEST2 by affecting the gating at the aperture in the absence of intracellular glutamate. The cofactor is Mg(2+). Requires Mn(2+) as cofactor. Palmitoylated; undergoes autopalmitoylation. Post-translationally, acetylated by EP300/p300; acetylation is stimulated by increased glutamine levels and promotes ubiquitin-mediated proteasomal degradation. In terms of processing, ubiquitinated by ZNRF1. Ubiquitinated by the DCX (DDB1-CUL4-X-box) E3 ubiquitin-protein ligase complex called CRL4(CRBN), leading to proteasomal degradation. In the adult liver, expression is restricted to a small population of hepatocytes which form only a small rim of one to three hepatocytes around the central veins. Expressed in lung microvascular endothelial cells.

The protein resides in the cytoplasm. It localises to the cytosol. Its subcellular location is the microsome. The protein localises to the mitochondrion. It is found in the cell membrane. It carries out the reaction L-glutamate + NH4(+) + ATP = L-glutamine + ADP + phosphate + H(+). The catalysed reaction is L-cysteinyl-[protein] + hexadecanoyl-CoA = S-hexadecanoyl-L-cysteinyl-[protein] + CoA. Its activity is regulated as follows. Glutamine synthetase activity is inhibited by methionine sulfoximine (MSO). Glutamine synthetase that catalyzes the ATP-dependent conversion of glutamate and ammonia to glutamine. Its role depends on tissue localization: in the brain, it regulates the levels of toxic ammonia and converts neurotoxic glutamate to harmless glutamine, whereas in the liver, it is one of the enzymes responsible for the removal of ammonia. Plays a key role in ammonium detoxification during erythropoiesis: the glutamine synthetase activity is required to remove ammonium generated by porphobilinogen deaminase (HMBS) during heme biosynthesis to prevent ammonium accumulation and oxidative stress. Essential for proliferation of fetal skin fibroblasts. Independently of its glutamine synthetase activity, required for endothelial cell migration during vascular development. Involved in angiogenesis by regulating membrane localization and activation of the GTPase RHOJ, possibly by promoting RHOJ palmitoylation. May act as a palmitoyltransferase for RHOJ: able to autopalmitoylate and then transfer the palmitoyl group to RHOJ. Plays a role in ribosomal 40S subunit biogenesis. Through the interaction with BEST2, inhibits BEST2 channel activity by affecting the gating at the aperture in the absence of intracellular L-glutamate, but sensitizes BEST2 to intracellular L-glutamate, which promotes the opening of BEST2 and thus relieves its inhibitory effect on BEST2. In Rattus norvegicus (Rat), this protein is Glutamine synthetase.